Here is a 207-residue protein sequence, read N- to C-terminus: Uracil phosphoribosyltransferase (207 aa).

Residues Arg-77, Arg-102, and 129 to 137 contribute to the 5-phospho-alpha-D-ribose 1-diphosphate site; that span reads DPMLATGVS. Residues Ile-192 and 197–199 contribute to the uracil site; that span reads GDA. Residue Asp-198 participates in 5-phospho-alpha-D-ribose 1-diphosphate binding.

It belongs to the UPRTase family. Mg(2+) serves as cofactor.

It catalyses the reaction UMP + diphosphate = 5-phospho-alpha-D-ribose 1-diphosphate + uracil. It functions in the pathway pyrimidine metabolism; UMP biosynthesis via salvage pathway; UMP from uracil: step 1/1. Allosterically activated by GTP. Its function is as follows. Catalyzes the conversion of uracil and 5-phospho-alpha-D-ribose 1-diphosphate (PRPP) to UMP and diphosphate. This is Uracil phosphoribosyltransferase from Fervidobacterium nodosum (strain ATCC 35602 / DSM 5306 / Rt17-B1).